The primary structure comprises 59 residues: Ferredoxin (59 aa).

One can recognise a 4Fe-4S ferredoxin-type domain in the interval Lys-2–Asp-29. [4Fe-4S] cluster-binding residues include Cys-10, Cys-13, and Cys-16. Cysteines 20 and 43 form a disulfide. Residue Cys-51 coordinates [4Fe-4S] cluster.

Requires [4Fe-4S] cluster as cofactor. [3Fe-4S] cluster serves as cofactor.

Its function is as follows. Ferredoxins are iron-sulfur proteins that transfer electrons in a wide variety of metabolic reactions. The polypeptide is Ferredoxin (Thermococcus litoralis).